Consider the following 62-residue polypeptide: Alpha-elapitoxin-Nn2a (62 aa).

The disordered stretch occupies residues 1 to 20 (LECHNQQSSQTPTTTDCSGG). Disulfide bonds link Cys3-Cys24, Cys17-Cys41, Cys43-Cys54, and Cys55-Cys60.

This sequence belongs to the three-finger toxin family. Short-chain subfamily. Type I alpha-neurotoxin sub-subfamily. In terms of tissue distribution, expressed by the venom gland.

The protein resides in the secreted. Its function is as follows. Nicotinic acetylcholine receptor antagonist. Binds to muscle nicotinic acetylcholine receptor (nAChR) and inhibits acetylcholine from binding to the receptor, thereby impairing neuromuscular transmission. Produces peripheral paralysis by blocking neuromuscular transmission at the postsynaptic site. Induces concentration-dependent inhibition of indirect twitches and abolishes contractile responses of tissues to exogenous acetylcholine and carbachol, in the chick biventer cervicis nerve-muscle preparation at 100-300 nM (in vitro). Prior incubation of tissues with Indian polyvalent antivenom (1 ml/0.6 mg) prevents the neurotoxic effects at 100 nM (in vitro). Addition of Indian polyvalent antivenom (1 ml/0.6 mg) at the t90 time point does not reverse the neurotoxic effects (in vitro). Displays non-competitive antagonism of concentration-response curves to carbachol, with a pA2 of 8.01 (in vitro). This chain is Alpha-elapitoxin-Nn2a, found in Naja naja (Indian cobra).